The following is a 443-amino-acid chain: Ribosomal protein uS12 methylthiotransferase RimO (443 aa).

One can recognise an MTTase N-terminal domain in the interval 1 to 114 (MGFVSLGCPK…VMQAVHTHLP (114 aa)). [4Fe-4S] cluster is bound by residues C8, C44, C73, C145, C149, and C152. In terms of domain architecture, Radical SAM core spans 131-372 (LTPKHYAYLK…MEVAEEVSAR (242 aa)). Positions 375–443 (QRKVGQTLRV…ADGHDLWGAV (69 aa)) constitute a TRAM domain.

Belongs to the methylthiotransferase family. RimO subfamily. [4Fe-4S] cluster is required as a cofactor.

Its subcellular location is the cytoplasm. The enzyme catalyses L-aspartate(89)-[ribosomal protein uS12]-hydrogen + (sulfur carrier)-SH + AH2 + 2 S-adenosyl-L-methionine = 3-methylsulfanyl-L-aspartate(89)-[ribosomal protein uS12]-hydrogen + (sulfur carrier)-H + 5'-deoxyadenosine + L-methionine + A + S-adenosyl-L-homocysteine + 2 H(+). In terms of biological role, catalyzes the methylthiolation of an aspartic acid residue of ribosomal protein uS12. The chain is Ribosomal protein uS12 methylthiotransferase RimO from Cupriavidus necator (strain ATCC 17699 / DSM 428 / KCTC 22496 / NCIMB 10442 / H16 / Stanier 337) (Ralstonia eutropha).